Here is a 460-residue protein sequence, read N- to C-terminus: 3-isopropylmalate dehydratase large subunit (460 aa).

3 residues coordinate [4Fe-4S] cluster: C338, C398, and C401.

Belongs to the aconitase/IPM isomerase family. LeuC type 1 subfamily. Heterodimer of LeuC and LeuD. [4Fe-4S] cluster serves as cofactor.

It carries out the reaction (2R,3S)-3-isopropylmalate = (2S)-2-isopropylmalate. It functions in the pathway amino-acid biosynthesis; L-leucine biosynthesis; L-leucine from 3-methyl-2-oxobutanoate: step 2/4. In terms of biological role, catalyzes the isomerization between 2-isopropylmalate and 3-isopropylmalate, via the formation of 2-isopropylmaleate. In Streptococcus sanguinis (strain SK36), this protein is 3-isopropylmalate dehydratase large subunit.